The sequence spans 518 residues: ATPase expression protein 2, mitochondrial (518 aa).

A mitochondrion-targeting transit peptide spans 1–15 (MLKKSRVLGKIPIPY).

It belongs to the AEP2 family. As to quaternary structure, binds to the 5'UTR of the OLI1 mRNA.

It localises to the mitochondrion. Required for translation of the mitochondrial OLI1 transcript coding for the mitochondrial ATP synthase subunit 9. The protein is ATPase expression protein 2, mitochondrial (AEP2) of Kluyveromyces lactis (strain ATCC 8585 / CBS 2359 / DSM 70799 / NBRC 1267 / NRRL Y-1140 / WM37) (Yeast).